A 357-amino-acid chain; its full sequence is GTPase Obg (357 aa).

The Obg domain maps to Met1 to Ile158. One can recognise an OBG-type G domain in the interval Ala159–Glu345. GTP is bound by residues Gly165 to Ser172, Phe190 to Thr194, Asp212 to Gly215, Thr280 to Asp283, and Ser326 to Val328. Residues Ser172 and Thr192 each coordinate Mg(2+).

Belongs to the TRAFAC class OBG-HflX-like GTPase superfamily. OBG GTPase family. Monomer. Requires Mg(2+) as cofactor.

Its subcellular location is the cytoplasm. An essential GTPase which binds GTP, GDP and possibly (p)ppGpp with moderate affinity, with high nucleotide exchange rates and a fairly low GTP hydrolysis rate. Plays a role in control of the cell cycle, stress response, ribosome biogenesis and in those bacteria that undergo differentiation, in morphogenesis control. This Nautilia profundicola (strain ATCC BAA-1463 / DSM 18972 / AmH) protein is GTPase Obg.